Here is a 771-residue protein sequence, read N- to C-terminus: U3 small nucleolar RNA-associated protein 14 homolog A (771 aa).

Residues 23-49 (PKDYLLSESEDEGDNDGERKHQKLLEA) form a disordered region. 5 positions are modified to phosphoserine: Ser29, Ser31, Ser52, Ser77, and Ser81. Positions 40–67 (ERKHQKLLEAISSLDGKNRRKLAERSEA) form a coiled coil. A Glycyl lysine isopeptide (Lys-Gly) (interchain with G-Cter in SUMO2) cross-link involves residue Lys122. A Phosphothreonine modification is found at Thr205. Coiled coils occupy residues 216–290 (SLEE…EKAR) and 317–347 (LEARQAMQEQLSKNKELTQKLQVASESEEEE). 2 disordered regions span residues 334-355 (TQKLQVASESEEEEGGTEDVEE) and 367-557 (MNAD…KKEQ). Residues 342–355 (ESEEEEGGTEDVEE) show a composition bias toward acidic residues. The span at 399-436 (LEAHGVSESEGEERPVAEEEILLREFEERRSLRKRSEL) shows a compositional bias: basic and acidic residues. 2 positions are modified to phosphoserine: Ser405 and Ser407. Arg433 is modified (citrulline). A phosphoserine mark is found at Ser437 and Ser445. Lys449 is covalently cross-linked (Glycyl lysine isopeptide (Lys-Gly) (interchain with G-Cter in SUMO2)). A Phosphoserine modification is found at Ser453. Residues 504-529 (RPERVQTLEELEELGKEECFQNKELP) are compositionally biased toward basic and acidic residues. Lys519 participates in a covalent cross-link: Glycyl lysine isopeptide (Lys-Gly) (interchain with G-Cter in SUMO2). Residues 535–544 (GQQSERTPNN) show a composition bias toward polar residues. Positions 547–557 (DAPKEKKKKEQ) are enriched in basic and acidic residues. Ser569 bears the Phosphoserine mark. Arg589 bears the Citrulline mark. A Glycyl lysine isopeptide (Lys-Gly) (interchain with G-Cter in SUMO2) cross-link involves residue Lys733. A compositionally biased stretch (polar residues) spans 740 to 751 (RSSSRSDLSVIQ). Positions 740–771 (RSSSRSDLSVIQRNPKRITTRHKKQLKKCSVD) are disordered. Residues 753 to 771 (NPKRITTRHKKQLKKCSVD) are compositionally biased toward basic residues.

Belongs to the UTP14 family. As to quaternary structure, interacts with DHX37. Post-translationally, citrullinated by PADI4. In terms of tissue distribution, ubiquitously expressed.

Its subcellular location is the nucleus. It localises to the nucleolus. In terms of biological role, may be required for ribosome biogenesis. This is U3 small nucleolar RNA-associated protein 14 homolog A (UTP14A) from Homo sapiens (Human).